Here is a 248-residue protein sequence, read N- to C-terminus: MSVTMREMLEAGVHFGHQTRFWSPKMAPYIFGARNKIHIVNLEKTLAKYNEAMAFVKKLASSRGTILFVGTKRQAREIIGEEALRAGAPFVDQRWLGGMLTNFKTVKTSIKRLKDMEVAVEAGELEKMPKKEALTFRRELEKLQKSIGGIKEMAGLPDAIFVIDVGYHKIAITEAEKLGIPVIGVVDTNHSPDGVAYVIPGNDDSSRAIQLYARGVADAILEGRSQVVQDIVAAGGDDEFVEVQDAAQ.

The protein belongs to the universal ribosomal protein uS2 family.

The polypeptide is Small ribosomal subunit protein uS2 (Dechloromonas aromatica (strain RCB)).